A 337-amino-acid chain; its full sequence is DNA-directed RNA polymerase subunit alpha (337 aa).

Positions 1 to 233 are alpha N-terminal domain (alpha-NTD); sequence MIREKVTVST…DLFIPFLHME (233 aa). The tract at residues 266–337 is alpha C-terminal domain (alpha-CTD); the sequence is KLALKSIFID…FAIDLPKNQF (72 aa).

It belongs to the RNA polymerase alpha chain family. In terms of assembly, in plastids the minimal PEP RNA polymerase catalytic core is composed of four subunits: alpha, beta, beta', and beta''. When a (nuclear-encoded) sigma factor is associated with the core the holoenzyme is formed, which can initiate transcription.

Its subcellular location is the plastid. The protein localises to the chloroplast. The enzyme catalyses RNA(n) + a ribonucleoside 5'-triphosphate = RNA(n+1) + diphosphate. In terms of biological role, DNA-dependent RNA polymerase catalyzes the transcription of DNA into RNA using the four ribonucleoside triphosphates as substrates. The protein is DNA-directed RNA polymerase subunit alpha of Ipomoea purpurea (Common morning glory).